A 251-amino-acid polypeptide reads, in one-letter code: Probable transcriptional regulatory protein jk1057 (251 aa).

A disordered region spans residues 1–22 (MAGHSKWATTKHKKAANDAKRG).

The protein belongs to the TACO1 family.

Its subcellular location is the cytoplasm. The sequence is that of Probable transcriptional regulatory protein jk1057 from Corynebacterium jeikeium (strain K411).